The sequence spans 1392 residues: Condensin complex subunit 1 (1392 aa).

The segment at 1-593 (MSPHNFEFHL…TGSKDSPSVP (593 aa)) is interaction with SMC2 and SMC4. Phosphoserine occurs at positions 20 and 575. Disordered stretches follow at residues 569 to 602 (EAST…QSND), 945 to 966 (REEQ…ETTM), and 1293 to 1392 (FETG…RHRS). Basic and acidic residues predominate over residues 945–960 (REEQEHRAKEPKEKTA). Serine 1300, serine 1305, serine 1320, and serine 1323 each carry phosphoserine. The residue at position 1329 (threonine 1329) is a Phosphothreonine. Residues 1332 to 1353 (PRRTKPGRPQTQQRKKSQRKAK) carry the Bipartite nuclear localization signal motif. Over residues 1344 to 1353 (QRKKSQRKAK) the composition is skewed to basic residues. Serine 1358, serine 1361, serine 1362, and serine 1367 each carry phosphoserine. The segment covering 1360–1373 (ESSEDELSAEMTEE) has biased composition (acidic residues). Phosphothreonine; by CDK1 is present on residues threonine 1375 and threonine 1380. Serine 1386 carries the post-translational modification Phosphoserine.

It belongs to the CND1 (condensin subunit 1) family. In terms of assembly, component of the condensin complex, which contains the SMC2 and SMC4 heterodimer, and three non SMC subunits that probably regulate the complex: NCAPH/BRRN1, NCAPD2/CAPD2 and NCAPG. Interacts with histones H1 and H3. In terms of processing, phosphorylated by CDK1. Its phosphorylation, as well as that of NCAPH and NCAPG subunits, activates the condensin complex and is required for chromosome condensation.

It is found in the nucleus. The protein resides in the cytoplasm. Its subcellular location is the chromosome. Functionally, regulatory subunit of the condensin complex, a complex required for conversion of interphase chromatin into mitotic-like condense chromosomes. The condensin complex probably introduces positive supercoils into relaxed DNA in the presence of type I topoisomerases and converts nicked DNA into positive knotted forms in the presence of type II topoisomerases. May target the condensin complex to DNA via its C-terminal domain. May promote the resolution of double-strand DNA catenanes (intertwines) between sister chromatids. Condensin-mediated compaction likely increases tension in catenated sister chromatids, providing directionality for type II topoisomerase-mediated strand exchanges toward chromatid decatenation. Required for decatenation of non-centromeric ultrafine DNA bridges during anaphase. Early in neurogenesis, may play an essential role to ensure accurate mitotic chromosome condensation in neuron stem cells, ultimately affecting neuron pool and cortex size. In Mus musculus (Mouse), this protein is Condensin complex subunit 1 (Ncapd2).